The sequence spans 433 residues: 3-phosphoshikimate 1-carboxyvinyltransferase (433 aa).

Positions 23, 24, and 28 each coordinate 3-phosphoshikimate. Residue lysine 23 participates in phosphoenolpyruvate binding. Phosphoenolpyruvate-binding residues include glycine 95 and arginine 123. 6 residues coordinate 3-phosphoshikimate: serine 170, serine 171, glutamine 172, serine 198, aspartate 317, and lysine 344. A phosphoenolpyruvate-binding site is contributed by glutamine 172. Aspartate 317 acts as the Proton acceptor in catalysis. The phosphoenolpyruvate site is built by arginine 348, arginine 391, and lysine 416.

The protein belongs to the EPSP synthase family. In terms of assembly, monomer.

The protein resides in the cytoplasm. The catalysed reaction is 3-phosphoshikimate + phosphoenolpyruvate = 5-O-(1-carboxyvinyl)-3-phosphoshikimate + phosphate. The protein operates within metabolic intermediate biosynthesis; chorismate biosynthesis; chorismate from D-erythrose 4-phosphate and phosphoenolpyruvate: step 6/7. In terms of biological role, catalyzes the transfer of the enolpyruvyl moiety of phosphoenolpyruvate (PEP) to the 5-hydroxyl of shikimate-3-phosphate (S3P) to produce enolpyruvyl shikimate-3-phosphate and inorganic phosphate. The chain is 3-phosphoshikimate 1-carboxyvinyltransferase from Neisseria gonorrhoeae (strain NCCP11945).